We begin with the raw amino-acid sequence, 174 residues long: Alpha-crystallin B chain (174 aa).

The residue at position 1 (methionine 1) is an N-acetylmethionine. The sHSP domain maps to 55-163; it reads RMPSWLETGL…PERSIPITRE (109 aa). Zn(2+) contacts are provided by histidine 82, histidine 103, glutamate 105, and histidine 110. A disordered region spans residues 148–174; it reads RKQSDVPERSIPITREEKPAIAGSQRK. The span at 149-166 shows a compositional bias: basic and acidic residues; sequence KQSDVPERSIPITREEKP.

Belongs to the small heat shock protein (HSP20) family. In terms of assembly, heteromer composed of three CRYAA and one CRYAB subunits. Aggregates with homologous proteins, including the small heat shock protein HSPB1, to form large heteromeric complexes. Inter-subunit bridging via zinc ions enhances stability, which is crucial as there is no protein turn over in the lens. As to expression, lens as well as other tissues.

In terms of biological role, may contribute to the transparency and refractive index of the lens. This is Alpha-crystallin B chain (CRYAB) from Gallus gallus (Chicken).